Consider the following 128-residue polypeptide: Calcitonin gene-related peptide 1 (128 aa).

A signal peptide spans 1 to 25; it reads MGLWKSSPFLAFSILVLCQAGGLQA. Residues 26 to 80 constitute a propeptide that is removed on maturation; that stretch reads APFRSALEGLPDPTALSEKEGRLLLAALVKAYVQRKNELEQEQEQETEGSSITAQ. The disordered stretch occupies residues 63–83; the sequence is ELEQEQEQETEGSSITAQKRS. Residues 74 to 83 show a composition bias toward polar residues; it reads GSSITAQKRS. A disulfide bridge connects residues Cys-84 and Cys-89. Phe-119 bears the Phenylalanine amide mark. A propeptide spanning residues 125–128 is cleaved from the precursor; the sequence is DLRA.

Belongs to the calcitonin family.

It is found in the secreted. Its function is as follows. CGRP1/CALCA is a peptide hormone that induces vasodilation mediated by the CALCRL-RAMP1 receptor complex. Dilates a variety of vessels including the coronary, cerebral and systemic vasculature. Its abundance in the CNS also points toward a neurotransmitter or neuromodulator role. It also elevates platelet cAMP. CGRP1 can also bind and activate CALCR-RAMP1 (AMYR1) receptor complex. The sequence is that of Calcitonin gene-related peptide 1 (CALCA) from Canis lupus familiaris (Dog).